The chain runs to 480 residues: Aromatic-L-amino-acid decarboxylase (480 aa).

At Lys292 the chain carries N6-(pyridoxal phosphate)lysine.

The protein belongs to the group II decarboxylase family. Requires pyridoxal 5'-phosphate as cofactor.

The enzyme catalyses L-tryptophan + H(+) = tryptamine + CO2. The catalysed reaction is L-phenylalanine + H(+) = 2-phenylethylamine + CO2. It carries out the reaction 5-hydroxy-L-tryptophan + H(+) = serotonin + CO2. It catalyses the reaction L-dopa + H(+) = dopamine + CO2. Involved in bacillamide C biosynthesis. Catalyzes the decarboxylation of L-tryptophan to tryptamine. The tryptamine obtained is then probably incorporated into the bacillamide C peptide, which is derived from the amino acids alanine, cysteine and tryptophan through nonribosomal peptide synthetase (NRPS) biosynthesis strategy. L-tryptophan is the best substrate, but the enzyme displays broad substrate specificity for various aromatic amino acids in vitro and it can also catalyze the decarboxylation of L-phenylalanine, 5-hydroxy-L-tryptophan (L-HTP) and L-DOPA, with lower efficiency. Exhibits weak activity with L-tyrosine. The polypeptide is Aromatic-L-amino-acid decarboxylase (Bacillus atrophaeus).